Here is a 180-residue protein sequence, read N- to C-terminus: MKQRLKQLYMETIVPKLMEKFKYKNIHQVPRIKKIVINRGIGEASQSNKILESSFKELNLIAGQKGVITRSKKAIATFKLRKNVPVGVTVTLRGERMYGFLDRMINLALPRIRDFQGINPKSFDKFGSYSLGLEEQLMFPEMEYDKIDQICGMDISIVTTSTKIEEGLILLKEFGLPFKN.

It belongs to the universal ribosomal protein uL5 family. Part of the 50S ribosomal subunit; contacts the 5S rRNA.

The protein localises to the plastid. The protein resides in the chloroplast. In terms of biological role, binds 5S rRNA, forms part of the central protuberance of the 50S subunit. This Oedogonium cardiacum (Filamentous green alga) protein is Large ribosomal subunit protein uL5c (rpl5).